The chain runs to 839 residues: Probable beta-glucosidase I (839 aa).

N-linked (GlcNAc...) asparagine glycosylation occurs at asparagine 197. Residue aspartate 225 is part of the active site. The region spanning aspartate 395–valine 555 is the PA14 domain. An N-linked (GlcNAc...) asparagine glycan is attached at asparagine 620.

This sequence belongs to the glycosyl hydrolase 3 family.

The protein localises to the secreted. It carries out the reaction Hydrolysis of terminal, non-reducing beta-D-glucosyl residues with release of beta-D-glucose.. Its pathway is glycan metabolism; cellulose degradation. Beta-glucosidases are one of a number of cellulolytic enzymes involved in the degradation of cellulosic biomass. Catalyzes the last step releasing glucose from the inhibitory cellobiose. The polypeptide is Probable beta-glucosidase I (bglI) (Aspergillus oryzae (strain ATCC 42149 / RIB 40) (Yellow koji mold)).